The primary structure comprises 259 residues: UPF0246 protein PputGB1_4560 (259 aa).

Belongs to the UPF0246 family.

This Pseudomonas putida (strain GB-1) protein is UPF0246 protein PputGB1_4560.